The sequence spans 906 residues: Protein translocase subunit SecA (906 aa).

Residues Gln-89, 107–111 (GEGKT), and Asp-502 contribute to the ATP site. Zn(2+) is bound by residues Cys-885, Cys-887, Cys-896, and His-897.

Belongs to the SecA family. As to quaternary structure, monomer and homodimer. Part of the essential Sec protein translocation apparatus which comprises SecA, SecYEG and auxiliary proteins SecDF-YajC and YidC. Zn(2+) is required as a cofactor.

It is found in the cell inner membrane. It localises to the cytoplasm. It carries out the reaction ATP + H2O + cellular proteinSide 1 = ADP + phosphate + cellular proteinSide 2.. In terms of biological role, part of the Sec protein translocase complex. Interacts with the SecYEG preprotein conducting channel. Has a central role in coupling the hydrolysis of ATP to the transfer of proteins into and across the cell membrane, serving both as a receptor for the preprotein-SecB complex and as an ATP-driven molecular motor driving the stepwise translocation of polypeptide chains across the membrane. In Rhizobium rhizogenes (strain K84 / ATCC BAA-868) (Agrobacterium radiobacter), this protein is Protein translocase subunit SecA.